Here is an 818-residue protein sequence, read N- to C-terminus: MSSWRKIYYKLLNLPLKILVKSKLIPTDPITELRLDTTRPILYVLPYHSKADLLALRQQCLEQDLPDPLNLLEIGDTELPSYVFIDNGPRVFRYCAPKQESVKIFHAYLDLHRNNPNLDIQLLPVSVMFGRSPGREGQNAPHLRLLNGIQKFFAILWLGRDSFVRFSNTVSLRYMATEHGTDKTIAHKLARVARMHYSRQRLAAVGPRLPVRQELFNKLLASKAIEKAVSDEARTKKISHEKARQNAINMMEEIAANFSYETVRLSGRVLGWTWNRLYQGINVHNAERIRRLAQDGHELVYAPCHRSHMDYLLLSYVLYHQGLVPPHIAAGINLNFWPAGPIFRRLGAFFIRRTFKGNKLYATIFREYLGELFARGYSVEYFMEGGRSRTGRLLDPKTGTLSMTLQALLRGESRPITIIPIYIGYEHVMEVATYAKELRGATKEKEGFFQMIRGLRKLRNLGQGYVNFGEPIPLIQYLNNHVPSWRDSIDPIEFHRPEWFNPTVNQLSEKIMVNINNTAAANAINLCSTALLASRQRALTREQLLEQLDCYIQLMRNAPYATDVTVPKKTAEELLEHALQMDKFEVDKDSMGDIIILPRDRAVLMTYYRNNIQHLLVLPSLIACIVIHHRRISREALLSQVAIIYPLLKAELFMRYSKTELPEVVNTLINELTRQCLICNKEHGMLVLNPARIRPLQLLAAGIRETLQRYAITLSLLNANPVISRGVLEKESRMLAQRLSVLHGINAPEFFDKAVFTTSVNTLREEGYISDSGNAITANTQELYQVLGELMSPEIRLTIESVSLPPEHNDTEESAREG.

The HXXXXD motif signature appears at 305 to 310; the sequence is HRSHMD.

It belongs to the GPAT/DAPAT family.

The protein localises to the cell inner membrane. The enzyme catalyses sn-glycerol 3-phosphate + an acyl-CoA = a 1-acyl-sn-glycero-3-phosphate + CoA. Its pathway is phospholipid metabolism; CDP-diacylglycerol biosynthesis; CDP-diacylglycerol from sn-glycerol 3-phosphate: step 1/3. The protein is Glycerol-3-phosphate acyltransferase of Photorhabdus laumondii subsp. laumondii (strain DSM 15139 / CIP 105565 / TT01) (Photorhabdus luminescens subsp. laumondii).